Reading from the N-terminus, the 376-residue chain is 4-hydroxy-3-methylbut-2-enyl diphosphate reductase (376 aa).

[4Fe-4S] cluster is bound at residue Cys-19. The (2E)-4-hydroxy-3-methylbut-2-enyl diphosphate site is built by His-48 and His-99. Residues His-48 and His-99 each contribute to the dimethylallyl diphosphate site. Positions 48 and 99 each coordinate isopentenyl diphosphate. Cys-121 provides a ligand contact to [4Fe-4S] cluster. A (2E)-4-hydroxy-3-methylbut-2-enyl diphosphate-binding site is contributed by His-149. Residue His-149 coordinates dimethylallyl diphosphate. His-149 is a binding site for isopentenyl diphosphate. Glu-151 functions as the Proton donor in the catalytic mechanism. (2E)-4-hydroxy-3-methylbut-2-enyl diphosphate is bound at residue Thr-208. Cys-236 serves as a coordination point for [4Fe-4S] cluster. (2E)-4-hydroxy-3-methylbut-2-enyl diphosphate contacts are provided by Ser-264, Asn-266, and Ser-307. Ser-264, Asn-266, and Ser-307 together coordinate dimethylallyl diphosphate. Isopentenyl diphosphate contacts are provided by Ser-264, Asn-266, and Ser-307.

Belongs to the IspH family. The cofactor is [4Fe-4S] cluster.

It carries out the reaction isopentenyl diphosphate + 2 oxidized [2Fe-2S]-[ferredoxin] + H2O = (2E)-4-hydroxy-3-methylbut-2-enyl diphosphate + 2 reduced [2Fe-2S]-[ferredoxin] + 2 H(+). The enzyme catalyses dimethylallyl diphosphate + 2 oxidized [2Fe-2S]-[ferredoxin] + H2O = (2E)-4-hydroxy-3-methylbut-2-enyl diphosphate + 2 reduced [2Fe-2S]-[ferredoxin] + 2 H(+). The protein operates within isoprenoid biosynthesis; dimethylallyl diphosphate biosynthesis; dimethylallyl diphosphate from (2E)-4-hydroxy-3-methylbutenyl diphosphate: step 1/1. It participates in isoprenoid biosynthesis; isopentenyl diphosphate biosynthesis via DXP pathway; isopentenyl diphosphate from 1-deoxy-D-xylulose 5-phosphate: step 6/6. In terms of biological role, catalyzes the conversion of 1-hydroxy-2-methyl-2-(E)-butenyl 4-diphosphate (HMBPP) into a mixture of isopentenyl diphosphate (IPP) and dimethylallyl diphosphate (DMAPP). Acts in the terminal step of the DOXP/MEP pathway for isoprenoid precursor biosynthesis. This chain is 4-hydroxy-3-methylbut-2-enyl diphosphate reductase, found in Treponema pallidum (strain Nichols).